We begin with the raw amino-acid sequence, 68 residues long: Ribosome modulation factor (68 aa).

Belongs to the ribosome modulation factor family.

Its subcellular location is the cytoplasm. During stationary phase, converts 70S ribosomes to an inactive dimeric form (100S ribosomes). The protein is Ribosome modulation factor of Alcanivorax borkumensis (strain ATCC 700651 / DSM 11573 / NCIMB 13689 / SK2).